The sequence spans 460 residues: Polygalacturonase (460 aa).

The N-terminal stretch at 1-26 (MALKTQLLWSFVVVFVVSFSTTSCSG) is a signal peptide. An N-linked (GlcNAc...) asparagine glycan is attached at N280. The Proton donor role is filled by D292. H315 is a catalytic residue. The N-linked (GlcNAc...) asparagine glycan is linked to N421.

Belongs to the glycosyl hydrolase 28 family.

The protein localises to the secreted. Its subcellular location is the cell wall. It carries out the reaction (1,4-alpha-D-galacturonosyl)n+m + H2O = (1,4-alpha-D-galacturonosyl)n + (1,4-alpha-D-galacturonosyl)m.. In terms of biological role, acts in concert with the pectinesterase, in the ripening process. Is involved in cell wall metabolism, specifically in polyuronide degradation. The polypeptide is Polygalacturonase (Malus domestica (Apple)).